A 66-amino-acid chain; its full sequence is Small ribosomal subunit protein eS27 (66 aa).

Zn(2+) is bound by residues cysteine 21, cysteine 24, cysteine 40, and cysteine 43. The segment at 21–43 (CPNCGNEQTIFSHATFPVRCLSC) adopts a C4-type zinc-finger fold.

Belongs to the eukaryotic ribosomal protein eS27 family. As to quaternary structure, part of the 30S ribosomal subunit. Zn(2+) serves as cofactor.

The protein is Small ribosomal subunit protein eS27 of Saccharolobus solfataricus (strain ATCC 35092 / DSM 1617 / JCM 11322 / P2) (Sulfolobus solfataricus).